Consider the following 147-residue polypeptide: 3-dehydroquinate dehydratase (147 aa).

Tyr22 functions as the Proton acceptor in the catalytic mechanism. Residues Asn73, His79, and Asp86 each coordinate substrate. His99 functions as the Proton donor in the catalytic mechanism. Substrate-binding positions include 100–101 and Arg110; that span reads LS.

It belongs to the type-II 3-dehydroquinase family. In terms of assembly, homododecamer.

It catalyses the reaction 3-dehydroquinate = 3-dehydroshikimate + H2O. It participates in metabolic intermediate biosynthesis; chorismate biosynthesis; chorismate from D-erythrose 4-phosphate and phosphoenolpyruvate: step 3/7. Functionally, catalyzes a trans-dehydration via an enolate intermediate. The chain is 3-dehydroquinate dehydratase from Synechococcus sp. (strain WH7803).